Consider the following 392-residue polypeptide: Nicotinate phosphoribosyltransferase (392 aa).

A Phosphohistidine; by autocatalysis modification is found at His214.

It belongs to the NAPRTase family. In terms of processing, transiently phosphorylated on a His residue during the reaction cycle. Phosphorylation strongly increases the affinity for substrates and increases the rate of nicotinate D-ribonucleotide production. Dephosphorylation regenerates the low-affinity form of the enzyme, leading to product release.

The enzyme catalyses nicotinate + 5-phospho-alpha-D-ribose 1-diphosphate + ATP + H2O = nicotinate beta-D-ribonucleotide + ADP + phosphate + diphosphate. It participates in cofactor biosynthesis; NAD(+) biosynthesis; nicotinate D-ribonucleotide from nicotinate: step 1/1. In terms of biological role, catalyzes the synthesis of beta-nicotinate D-ribonucleotide from nicotinate and 5-phospho-D-ribose 1-phosphate at the expense of ATP. The protein is Nicotinate phosphoribosyltransferase of Xanthomonas euvesicatoria pv. vesicatoria (strain 85-10) (Xanthomonas campestris pv. vesicatoria).